Here is a 215-residue protein sequence, read N- to C-terminus: CUE domain-containing protein 4, mitochondrial (215 aa).

The N-terminal 29 residues, 1–29 (MQPEQLAGCAVVLTVTVLTLRWMFRVDKG), are a transit peptide targeting the mitochondrion. A CUE domain is found at 48–90 (VNSEHVHLVKTVFPHLESSAIAYDLQKTKNVDATIENALRGQP). Residues 109 to 191 (GAGASSHSEE…KEREELFRKR (83 aa)) are disordered. 2 stretches are compositionally biased toward low complexity: residues 122–140 (SHEV…SLAS) and 153–165 (SSRI…SSSS). The span at 180–191 (SKKEREELFRKR) shows a compositional bias: basic and acidic residues.

It localises to the mitochondrion. This Schizosaccharomyces pombe (strain 972 / ATCC 24843) (Fission yeast) protein is CUE domain-containing protein 4, mitochondrial.